The sequence spans 601 residues: MDRSFIRNFAIIAHIDHGKSTLSDRLLELTGSLTAREMQAQVLDAMDLERERGITIKAHSVRMMYKAHDDVVYQLNLIDTPGHVDFSYEVSRSLASCEGALLVVDASQGVEAQTLANAYLAINNGLEIIPVINKIDLPSADVERAKEMIEGAVGLDASHALPISAKTGMGVEDILESIVHLVPPPKGNPDHPLQALIFDSWFDSYRGVVILARIKEGTVRKGDKIMLWSNKHQFLVEEMGVLTPKPVAIEQLEAGEVGFIVANIKTVADVGIGDTITHVERPCLEALPGFEELKPMVFAGIYTVDAHEHTLLREALEKLRLNDSSFFFEPESSVALGFGFRCGFLGLLHMEIIQERLEREYDLDLITTAPGVRYKITLTDNSVIEVDNPSKWPDSTLIEKIEEPIITAMILTNEEYVGGILKLVEEKRGRQKNFEYVTGSRVMLTYELPLNEIVLDFYDRLKSVSRGYASLDYHLAGAWESPMVKLDIMVAGESVDALSTIVHKDFAYDRGRALVSKMRELIPRQMFEVPIQAAIGAKIIARETVAAMRKNVLAKCYGGDISRKRKLLEKQKEGKKRMKRIGKVDIPQEAFLAVLKVGENS.

One can recognise a tr-type G domain in the interval 4–186 (SFIRNFAIIA…SIVHLVPPPK (183 aa)). Residues 16-21 (DHGKST) and 133-136 (NKID) contribute to the GTP site.

It belongs to the TRAFAC class translation factor GTPase superfamily. Classic translation factor GTPase family. LepA subfamily.

It localises to the cell inner membrane. The enzyme catalyses GTP + H2O = GDP + phosphate + H(+). Functionally, required for accurate and efficient protein synthesis under certain stress conditions. May act as a fidelity factor of the translation reaction, by catalyzing a one-codon backward translocation of tRNAs on improperly translocated ribosomes. Back-translocation proceeds from a post-translocation (POST) complex to a pre-translocation (PRE) complex, thus giving elongation factor G a second chance to translocate the tRNAs correctly. Binds to ribosomes in a GTP-dependent manner. The sequence is that of Elongation factor 4 from Koribacter versatilis (strain Ellin345).